The sequence spans 439 residues: Gap junction gamma-2 protein (439 aa).

Residues Met1–Lys25 are Cytoplasmic-facing. A helical membrane pass occupies residues Val26–Ile46. The Extracellular portion of the chain corresponds to Tyr47–Arg78. Residues Phe79 to Val99 form a helical membrane-spanning segment. Residues His100 to Gln216 are Cytoplasmic-facing. The interval Gln108–Cys178 is disordered. Basic residues predominate over residues Arg112–Arg125. Residues Asp140 to Ala174 show a composition bias toward acidic residues. The chain crosses the membrane as a helical span at residues Leu217–Phe237. Topologically, residues Glu238 to Thr265 are extracellular. A helical transmembrane segment spans residues Val266–Met286. The Cytoplasmic portion of the chain corresponds to Ala287 to Ile439. The segment at Ala364 to Ile439 is disordered. A Phosphoserine modification is found at Ser371. A compositionally biased stretch (low complexity) spans Pro378 to Arg393.

This sequence belongs to the connexin family. Gamma-type subfamily. As to quaternary structure, a connexon is composed of a hexamer of connexins. Interacts with TJP1. In terms of tissue distribution, expressed in central nervous system, in sciatic nerve and sural nerve. Also detected in skeletal muscles.

The protein localises to the cell membrane. The protein resides in the cell junction. Its subcellular location is the gap junction. In terms of biological role, one gap junction consists of a cluster of closely packed pairs of transmembrane channels, the connexons, through which materials of low MW diffuse from one cell to a neighboring cell. May play a role in myelination in central and peripheral nervous systems. This chain is Gap junction gamma-2 protein (GJC2), found in Homo sapiens (Human).